A 1497-amino-acid polypeptide reads, in one-letter code: Collagen alpha-2(V) chain (1497 aa).

Positions 1-26 are cleaved as a signal peptide; that stretch reads MMANWVGARPLLILSVLLGYCVSIKA. One can recognise a VWFC domain in the interval 38 to 96; sequence IACTQHGQMYLNRDIWKPSPCQICVCDNGAILCDKIECPEVLNCANPITPTGECCPVCP. Positions 103–1265 are disordered; it reads TSFGRGRKGQ…PDDTNKTDPG (1163 aa). The Cell attachment site signature appears at 141–143; the sequence is RGD. Positions 155 to 164 are enriched in low complexity; it reads PQGIDGEPGV. Over residues 168–180 the composition is skewed to pro residues; sequence PGAPGPPGHPSHP. The segment covering 210–225 has biased composition (low complexity); the sequence is PGSVGPVGPRGPQGLQ. Pro residues predominate over residues 234–246; that stretch reads AGPPGEPGEPGPM. Pro288, Pro291, and Pro294 each carry 4-hydroxyproline. Composition is skewed to low complexity over residues 320 to 338 and 425 to 441; these read EAGP…PRGM and TPGA…SGPP. The Cell attachment site motif lies at 504–506; that stretch reads RGD. Residues 550-559 show a composition bias toward gly residues; sequence GPKGGQGDPG. Over residues 602–611 the composition is skewed to low complexity; that stretch reads SIGIRGQPGS. A 4-hydroxyproline mark is found at Pro609 and Pro615. Positions 708–719 are enriched in basic and acidic residues; that stretch reads RGERGNPGERGE. A compositionally biased stretch (gly residues) spans 730–739; the sequence is GMAGGHGPDG. Residues 744–756 show a composition bias toward low complexity; sequence PGPTGTIGDTGPP. A compositionally biased stretch (basic and acidic residues) spans 774–785; that stretch reads KGDRGGIGEKGA. 2 stretches are compositionally biased toward low complexity: residues 824–839 and 878–891; these read PPGS…ENGP and LAGS…HGVP. Positions 892 to 901 are enriched in gly residues; the sequence is GLKGGRGTQG. Pro residues predominate over residues 917–927; the sequence is PPGPAGAPGPA. Short sequence motifs (cell attachment site) lie at residues 942-944, 1065-1067, and 1068-1070; these read RGD. Basic and acidic residues predominate over residues 1061–1070; that stretch reads AVGERGDRGD. Low complexity predominate over residues 1091 to 1112; that stretch reads APGDAGQRGEPGSRGPVGPPGR. 2 consecutive short sequence motifs (cell attachment site) follow at residues 1125–1127 and 1134–1136; these read RGD. The segment covering 1125–1139 has biased composition (basic and acidic residues); the sequence is RGDKGDNGDRGDRGQ. 2 stretches are compositionally biased toward pro residues: residues 1169–1179 and 1209–1224; these read PFGPRGPPGPV and EGPP…PGPP. Positions 1228–1497 are cleaved as a propeptide — C-terminal propeptide; it reads TAALGDIMGH…GLDIGPVCFM (270 aa). A glycan (N-linked (GlcNAc...) asparagine) is linked at Asn1260. The 234-residue stretch at 1264-1497 folds into the Fibrillar collagen NC1 domain; that stretch reads PGIHVTLKSL…GLDIGPVCFM (234 aa). Disulfide bonds link Cys1294–Cys1326, Cys1334–Cys1495, and Cys1403–Cys1448. Ca(2+) contacts are provided by Asp1312, Asn1314, Gln1315, and Asp1320. Asn1398 carries N-linked (GlcNAc...) asparagine glycosylation.

It belongs to the fibrillar collagen family. Trimers of two alpha 1(V) and one alpha 2(V) chains expressed in most tissues and trimers of one alpha 1(V), one alpha 2(V), and one alpha 3(V) chains with a more limited distribution of expression. Prolines at the third position of the tripeptide repeating unit (G-X-P) are hydroxylated in some or all of the chains. Probably 3-hydroxylated on prolines by LEPREL1. Post-translationally, hydroxylation on proline residues within the sequence motif, GXPG, is most likely to be 4-hydroxy as this fits the requirement for 4-hydroxylation in vertebrates.

It is found in the secreted. The protein localises to the extracellular space. The protein resides in the extracellular matrix. In terms of biological role, type V collagen is a member of group I collagen (fibrillar forming collagen). It is a minor connective tissue component of nearly ubiquitous distribution. Type V collagen binds to DNA, heparan sulfate, thrombospondin, heparin, and insulin. Type V collagen is a key determinant in the assembly of tissue-specific matrices. This chain is Collagen alpha-2(V) chain, found in Mus musculus (Mouse).